Consider the following 213-residue polypeptide: Uracil phosphoribosyltransferase (213 aa).

5-phospho-alpha-D-ribose 1-diphosphate is bound by residues Arg-78, Arg-103, and Asp-131–Thr-139. Uracil-binding positions include Ile-197 and Gly-202–Ala-204. Asp-203 serves as a coordination point for 5-phospho-alpha-D-ribose 1-diphosphate.

It belongs to the UPRTase family. Mg(2+) is required as a cofactor.

The enzyme catalyses UMP + diphosphate = 5-phospho-alpha-D-ribose 1-diphosphate + uracil. It functions in the pathway pyrimidine metabolism; UMP biosynthesis via salvage pathway; UMP from uracil: step 1/1. With respect to regulation, allosterically activated by GTP. Its function is as follows. Catalyzes the conversion of uracil and 5-phospho-alpha-D-ribose 1-diphosphate (PRPP) to UMP and diphosphate. The sequence is that of Uracil phosphoribosyltransferase from Bifidobacterium longum (strain DJO10A).